The chain runs to 382 residues: Flap endonuclease 1 (382 aa).

The interval 1–105 (MGIKGLNAII…HELTKRSSRR (105 aa)) is N-domain. Aspartate 34 is a binding site for Mg(2+). DNA is bound by residues arginine 47 and arginine 71. Mg(2+) is bound by residues aspartate 87, glutamate 156, glutamate 158, aspartate 177, and aspartate 179. The segment at 120–251 (EKMKQERRLV…VTALKLIKTH (132 aa)) is I-domain. Glutamate 156 contacts DNA. Positions 229 and 231 each coordinate DNA. Residue aspartate 231 participates in Mg(2+) binding. The interaction with PCNA stretch occupies residues 339-347 (IQGRLDGFF). The disordered stretch occupies residues 358–382 (AAAAKRAQENKKLNKNKNKVTKGRR). A compositionally biased stretch (basic residues) spans 370–382 (LNKNKNKVTKGRR).

It belongs to the XPG/RAD2 endonuclease family. FEN1 subfamily. Interacts with PCNA. Three molecules of RAD27 bind to one PCNA trimer with each molecule binding to one PCNA monomer. PCNA stimulates the nuclease activity without altering cleavage specificity. Requires Mg(2+) as cofactor. Post-translationally, phosphorylated. Phosphorylation upon DNA damage induces relocalization to the nuclear plasma.

It localises to the nucleus. Its subcellular location is the nucleolus. The protein localises to the nucleoplasm. The protein resides in the mitochondrion. Structure-specific nuclease with 5'-flap endonuclease and 5'-3' exonuclease activities involved in DNA replication and repair. During DNA replication, cleaves the 5'-overhanging flap structure that is generated by displacement synthesis when DNA polymerase encounters the 5'-end of a downstream Okazaki fragment. It enters the flap from the 5'-end and then tracks to cleave the flap base, leaving a nick for ligation. Also involved in the long patch base excision repair (LP-BER) pathway, by cleaving within the apurinic/apyrimidinic (AP) site-terminated flap. Acts as a genome stabilization factor that prevents flaps from equilibrating into structures that lead to duplications and deletions. Also possesses 5'-3' exonuclease activity on nicked or gapped double-stranded DNA, and exhibits RNase H activity. Also involved in replication and repair of rDNA and in repairing mitochondrial DNA. The protein is Flap endonuclease 1 of Saccharomyces cerevisiae (strain YJM789) (Baker's yeast).